We begin with the raw amino-acid sequence, 211 residues long: Dihydrofolate reductase (211 aa).

One can recognise a DHFR domain in the interval 7–210 (PIVGIVACLQ…YCFEFTLYNR (204 aa)). NADP(+)-binding positions include A13 and 20–26 (GIGFRGG). Position 34–39 (34–39 (EMKYFR)) interacts with substrate. 58 to 60 (RKT) provides a ligand contact to NADP(+). R74 contributes to the substrate binding site. NADP(+) contacts are provided by residues 80 to 82 (SRS) and 123 to 130 (GGGEVYSQ).

The protein belongs to the dihydrofolate reductase family.

It catalyses the reaction (6S)-5,6,7,8-tetrahydrofolate + NADP(+) = 7,8-dihydrofolate + NADPH + H(+). The protein operates within cofactor biosynthesis; tetrahydrofolate biosynthesis; 5,6,7,8-tetrahydrofolate from 7,8-dihydrofolate: step 1/1. Functionally, key enzyme in folate metabolism. Catalyzes an essential reaction for de novo glycine and purine synthesis, and for DNA precursor synthesis. This is Dihydrofolate reductase (DFR1) from Saccharomyces cerevisiae (strain ATCC 204508 / S288c) (Baker's yeast).